A 549-amino-acid chain; its full sequence is DNA polymerase lambda (549 aa).

The 100-residue stretch at 17–116 (DPDGMFRGVS…ERLPEHKFAI (100 aa)) folds into the BRCT domain. The interval 126–197 (KEGGAAGSGV…ASGDSKETIA (72 aa)) is disordered. Over residues 149-175 (PENRKETAGGNRESRDAIAHPNEDSDV) the composition is skewed to basic and acidic residues. The segment covering 180–197 (STCTSSQSASGDSKETIA) has biased composition (polar residues). The DNA-binding stretch occupies residues 233–247 (NIYRALGDDRRSFSY). Residue H280 is part of the active site. Residues 315–318 (GPAT) are DNA-binding. Residues R356, 387–390 (SYRR), and 396–399 (GDMD) each bind dCTP. The interval 390–399 (RGKSSCGDMD) is involved in primer binding. Positions 397, 399, and 464 each coordinate Mn(2+). The segment at 438-479 (IEGTDCGVDTYFGLCTYPGRELRHRIDLKVYPRNRHAFGLLA) is DNA-binding. N487 contacts dCTP.

It belongs to the DNA polymerase type-X family. As to quaternary structure, interacts with PCNA. The cofactor is Mn(2+). Expressed in proliferating tissues. Expressed in roots, root apex, young leaves, shoot apical meristem (SAM), flag leaves and panicles.

It is found in the nucleus. The enzyme catalyses DNA(n) + a 2'-deoxyribonucleoside 5'-triphosphate = DNA(n+1) + diphosphate. In terms of biological role, repair polymerase involved in base excision repair (BER) and responsible for repair of lesions that give rise to abasic (AP) sites in DNA. Has both DNA polymerase and terminal transferase activities. Has a 5'-deoxyribose-5-phosphate lyase (dRP lyase) activity. In Oryza sativa subsp. japonica (Rice), this protein is DNA polymerase lambda.